We begin with the raw amino-acid sequence, 246 residues long: Bis(5'-nucleosyl)-tetraphosphatase PrpE [asymmetrical] (246 aa).

It belongs to the PrpE family. Requires Ni(2+) as cofactor.

The enzyme catalyses P(1),P(4)-bis(5'-guanosyl) tetraphosphate + H2O = GMP + GTP + 2 H(+). Functionally, asymmetrically hydrolyzes Ap4p to yield AMP and ATP. This Bacillus cereus (strain 03BB102) protein is Bis(5'-nucleosyl)-tetraphosphatase PrpE [asymmetrical].